We begin with the raw amino-acid sequence, 84 residues long: Toxin Ts4 (84 aa).

The signal sequence occupies residues 1-19 (MKRMILFISCLLLIDIVVG). The LCN-type CS-alpha/beta domain maps to 21–82 (REGYPADSKG…IWTSETNKCG (62 aa)). 4 disulfides stabilise this stretch: Cys31–Cys81, Cys35–Cys57, Cys43–Cys62, and Cys47–Cys64. Position 81 is a cysteine amide (Cys81). Positions 82–84 (GKK) are excised as a propeptide.

This sequence belongs to the long (4 C-C) scorpion toxin superfamily. Sodium channel inhibitor family. Alpha subfamily. As to expression, expressed by the venom gland.

It localises to the secreted. In terms of biological role, not toxic. Induces an immune response similar to that induced by whole venom. Induces a dose dependent release of the neurotransmitters glutamic acid and gamma aminobutyric acid from rat brain synaptosomes. Thus, polyclonal antibodies raised against this protein can neutralize the effects of the venom. The sequence is that of Toxin Ts4 from Tityus serrulatus (Brazilian scorpion).